A 134-amino-acid polypeptide reads, in one-letter code: ATP synthase epsilon chain (134 aa).

The protein belongs to the ATPase epsilon chain family. As to quaternary structure, F-type ATPases have 2 components, CF(1) - the catalytic core - and CF(0) - the membrane proton channel. CF(1) has five subunits: alpha(3), beta(3), gamma(1), delta(1), epsilon(1). CF(0) has three main subunits: a, b and c.

The protein localises to the cell inner membrane. Produces ATP from ADP in the presence of a proton gradient across the membrane. This is ATP synthase epsilon chain from Nitratidesulfovibrio vulgaris (strain ATCC 29579 / DSM 644 / CCUG 34227 / NCIMB 8303 / VKM B-1760 / Hildenborough) (Desulfovibrio vulgaris).